Here is a 184-residue protein sequence, read N- to C-terminus: ATP synthase subunit b, chloroplastic (184 aa).

A helical transmembrane segment spans residues 27–49 (LATNPINLSVVLGVLIFFGKGVL).

Belongs to the ATPase B chain family. F-type ATPases have 2 components, F(1) - the catalytic core - and F(0) - the membrane proton channel. F(1) has five subunits: alpha(3), beta(3), gamma(1), delta(1), epsilon(1). F(0) has four main subunits: a(1), b(1), b'(1) and c(10-14). The alpha and beta chains form an alternating ring which encloses part of the gamma chain. F(1) is attached to F(0) by a central stalk formed by the gamma and epsilon chains, while a peripheral stalk is formed by the delta, b and b' chains.

The protein resides in the plastid. The protein localises to the chloroplast thylakoid membrane. Its function is as follows. F(1)F(0) ATP synthase produces ATP from ADP in the presence of a proton or sodium gradient. F-type ATPases consist of two structural domains, F(1) containing the extramembraneous catalytic core and F(0) containing the membrane proton channel, linked together by a central stalk and a peripheral stalk. During catalysis, ATP synthesis in the catalytic domain of F(1) is coupled via a rotary mechanism of the central stalk subunits to proton translocation. Component of the F(0) channel, it forms part of the peripheral stalk, linking F(1) to F(0). This Morus indica (Mulberry) protein is ATP synthase subunit b, chloroplastic.